The chain runs to 692 residues: Elongation factor G (692 aa).

Positions 8–283 (NRIRNIGIAA…AVIDYLPAPT (276 aa)) constitute a tr-type G domain. GTP is bound by residues 17 to 24 (AHIDAGKT), 81 to 85 (DTPGH), and 135 to 138 (NKMD).

This sequence belongs to the TRAFAC class translation factor GTPase superfamily. Classic translation factor GTPase family. EF-G/EF-2 subfamily.

Its subcellular location is the cytoplasm. Its function is as follows. Catalyzes the GTP-dependent ribosomal translocation step during translation elongation. During this step, the ribosome changes from the pre-translocational (PRE) to the post-translocational (POST) state as the newly formed A-site-bound peptidyl-tRNA and P-site-bound deacylated tRNA move to the P and E sites, respectively. Catalyzes the coordinated movement of the two tRNA molecules, the mRNA and conformational changes in the ribosome. The sequence is that of Elongation factor G from Helicobacter acinonychis (strain Sheeba).